The sequence spans 448 residues: Divalent metal cation transporter MntH (448 aa).

Transmembrane regions (helical) follow at residues 41–61 (LFAF…PGNW), 69–89 (SEFG…AVLL), 117–137 (GFVL…AEVI), 147–167 (FGIP…LVLF), 176–196 (IEVI…AEMV), 215–235 (IVTN…TVMP), 270–290 (FSLT…AAAF), 307–327 (LLNP…ALLA), 363–383 (VLAI…GINE), 384–404 (LLIF…IPLV), and 424–444 (IISW…LFYT).

This sequence belongs to the NRAMP family.

Its subcellular location is the cell membrane. Functionally, h(+)-stimulated, divalent metal cation uptake system. This Listeria welshimeri serovar 6b (strain ATCC 35897 / DSM 20650 / CCUG 15529 / CIP 8149 / NCTC 11857 / SLCC 5334 / V8) protein is Divalent metal cation transporter MntH.